Here is a 217-residue protein sequence, read N- to C-terminus: Uridylate kinase (217 aa).

Position 5-9 (5-9) interacts with ATP; it reads KLTGR. Gly37 provides a ligand contact to UMP. ATP-binding residues include Gly38 and Arg42. UMP is bound by residues Asp59 and 107 to 113; that span reads FQPGQST. The ATP site is built by Asn134, Tyr139, and Asp142.

The protein belongs to the UMP kinase family. In terms of assembly, homohexamer.

It is found in the cytoplasm. It carries out the reaction UMP + ATP = UDP + ADP. The protein operates within pyrimidine metabolism; CTP biosynthesis via de novo pathway; UDP from UMP (UMPK route): step 1/1. Its activity is regulated as follows. Inhibited by UTP. In terms of biological role, catalyzes the reversible phosphorylation of UMP to UDP. This chain is Uridylate kinase, found in Pyrobaculum calidifontis (strain DSM 21063 / JCM 11548 / VA1).